A 535-amino-acid chain; its full sequence is Ribonuclease Y 2 (535 aa).

Residues 1-21 (MLITGLIIGCLLIGLVIGYVV) form a helical membrane-spanning segment. Residues 207-268 (LEHTVTVPNG…IRREVARVAL (62 aa)) enclose the KH domain. The HD domain occupies 334–427 (VLLHSIEVAQ…VAAADAISGA (94 aa)).

This sequence belongs to the RNase Y family.

Its subcellular location is the cell membrane. Endoribonuclease that initiates mRNA decay. This Levilactobacillus brevis (strain ATCC 367 / BCRC 12310 / CIP 105137 / JCM 1170 / LMG 11437 / NCIMB 947 / NCTC 947) (Lactobacillus brevis) protein is Ribonuclease Y 2.